The following is a 363-amino-acid chain: Regulator of G-protein signaling rgs-3 (363 aa).

Residues 1–70 are disordered; that stretch reads MWRSYKAETP…NSSATSPTPS (70 aa). The segment covering 21-35 has biased composition (basic and acidic residues); that stretch reads LNLHDSSESDHEGRQ. 2 stretches are compositionally biased toward low complexity: residues 36 to 50 and 58 to 70; these read SRSA…APAS and PITN…PTPS. 2 RGS domains span residues 112–225 and 240–359; these read NCAN…LEYL and SFEG…IDLL.

In terms of processing, may be phosphorylated and activated by egl-4.

Modulates chemotaxis responses by regulating positively the sensitivity to CO2 levels in BAG neurons and by regulating negatively the sensitivity to quinine in ASH sensory neurons. This Caenorhabditis elegans protein is Regulator of G-protein signaling rgs-3 (rgs-3).